Here is a 457-residue protein sequence, read N- to C-terminus: Argininosuccinate lyase (457 aa).

Belongs to the lyase 1 family. Argininosuccinate lyase subfamily.

It localises to the cytoplasm. It catalyses the reaction 2-(N(omega)-L-arginino)succinate = fumarate + L-arginine. It participates in amino-acid biosynthesis; L-arginine biosynthesis; L-arginine from L-ornithine and carbamoyl phosphate: step 3/3. The polypeptide is Argininosuccinate lyase (Escherichia coli O9:H4 (strain HS)).